The following is a 511-amino-acid chain: Exodeoxyribonuclease 7 large subunit (511 aa).

It belongs to the XseA family. Heterooligomer composed of large and small subunits.

It is found in the cytoplasm. It carries out the reaction Exonucleolytic cleavage in either 5'- to 3'- or 3'- to 5'-direction to yield nucleoside 5'-phosphates.. Its function is as follows. Bidirectionally degrades single-stranded DNA into large acid-insoluble oligonucleotides, which are then degraded further into small acid-soluble oligonucleotides. This chain is Exodeoxyribonuclease 7 large subunit, found in Brucella suis biovar 1 (strain 1330).